Here is a 630-residue protein sequence, read N- to C-terminus: 1-deoxy-D-xylulose-5-phosphate synthase (630 aa).

Thiamine diphosphate is bound by residues His73 and 114–116; that span reads SHA. Asp146 lines the Mg(2+) pocket. Residues 147–148, Asn176, Phe287, and Glu371 each bind thiamine diphosphate; that span reads GA. Asn176 lines the Mg(2+) pocket.

Belongs to the transketolase family. DXPS subfamily. Homodimer. Mg(2+) serves as cofactor. Requires thiamine diphosphate as cofactor.

It carries out the reaction D-glyceraldehyde 3-phosphate + pyruvate + H(+) = 1-deoxy-D-xylulose 5-phosphate + CO2. Its pathway is metabolic intermediate biosynthesis; 1-deoxy-D-xylulose 5-phosphate biosynthesis; 1-deoxy-D-xylulose 5-phosphate from D-glyceraldehyde 3-phosphate and pyruvate: step 1/1. Catalyzes the acyloin condensation reaction between C atoms 2 and 3 of pyruvate and glyceraldehyde 3-phosphate to yield 1-deoxy-D-xylulose-5-phosphate (DXP). The polypeptide is 1-deoxy-D-xylulose-5-phosphate synthase (Corynebacterium jeikeium (strain K411)).